We begin with the raw amino-acid sequence, 102 residues long: Small ribosomal subunit protein bS18c (102 aa).

This sequence belongs to the bacterial ribosomal protein bS18 family. As to quaternary structure, part of the 30S ribosomal subunit.

The protein resides in the plastid. Its subcellular location is the chloroplast. This is Small ribosomal subunit protein bS18c from Phaseolus vulgaris (Kidney bean).